Here is a 474-residue protein sequence, read N- to C-terminus: Trehalose-6-phosphate synthase (474 aa).

D-glucose 6-phosphate is bound at residue arginine 10. Position 22-23 (glycine 22–glycine 23) interacts with UDP-alpha-D-glucose. Positions 77 and 131 each coordinate D-glucose 6-phosphate. UDP-alpha-D-glucose contacts are provided by arginine 263 and lysine 268. Arginine 301 contributes to the D-glucose 6-phosphate binding site. Residues phenylalanine 340 and leucine 366–glutamate 370 contribute to the UDP-alpha-D-glucose site.

Belongs to the glycosyltransferase 20 family. In terms of assembly, homotetramer.

The enzyme catalyses D-glucose 6-phosphate + UDP-alpha-D-glucose = alpha,alpha-trehalose 6-phosphate + UDP + H(+). It functions in the pathway glycan biosynthesis; trehalose biosynthesis. Functionally, probably involved in the osmoprotection via the biosynthesis of trehalose. Catalyzes the transfer of glucose from UDP-alpha-D-glucose (UDP-Glc) to D-glucose 6-phosphate (Glc-6-P) to form trehalose-6-phosphate. Acts with retention of the anomeric configuration of the UDP-sugar donor. This chain is Trehalose-6-phosphate synthase, found in Klebsiella pneumoniae subsp. pneumoniae (strain ATCC 700721 / MGH 78578).